The following is a 727-amino-acid chain: Fatty acid oxidation complex subunit alpha (727 aa).

The enoyl-CoA hydratase stretch occupies residues 1-200; it reads MNDQQPFSAI…RQGLVDEAVP (200 aa). Positions 316–727 are 3-hydroxyacyl-CoA dehydrogenase; that stretch reads KPIHYVGILG…PPTDEDDSAS (412 aa).

It in the N-terminal section; belongs to the enoyl-CoA hydratase/isomerase family. The protein in the central section; belongs to the 3-hydroxyacyl-CoA dehydrogenase family. Heterotetramer of two alpha chains (FadJ) and two beta chains (FadI).

The protein resides in the cytoplasm. It carries out the reaction a (3S)-3-hydroxyacyl-CoA = a (2E)-enoyl-CoA + H2O. The catalysed reaction is a 4-saturated-(3S)-3-hydroxyacyl-CoA = a (3E)-enoyl-CoA + H2O. It catalyses the reaction a (3S)-3-hydroxyacyl-CoA + NAD(+) = a 3-oxoacyl-CoA + NADH + H(+). The enzyme catalyses (3S)-3-hydroxybutanoyl-CoA = (3R)-3-hydroxybutanoyl-CoA. Its pathway is lipid metabolism; fatty acid beta-oxidation. Catalyzes the formation of a hydroxyacyl-CoA by addition of water on enoyl-CoA. Also exhibits 3-hydroxyacyl-CoA epimerase and 3-hydroxyacyl-CoA dehydrogenase activities. The protein is Fatty acid oxidation complex subunit alpha of Pectobacterium carotovorum subsp. carotovorum (strain PC1).